Consider the following 297-residue polypeptide: Bifunctional protein FolD (297 aa).

NADP(+) is bound by residues Gly-169–Ser-171, Ser-196, and Ile-237.

The protein belongs to the tetrahydrofolate dehydrogenase/cyclohydrolase family. Homodimer.

It catalyses the reaction (6R)-5,10-methylene-5,6,7,8-tetrahydrofolate + NADP(+) = (6R)-5,10-methenyltetrahydrofolate + NADPH. The enzyme catalyses (6R)-5,10-methenyltetrahydrofolate + H2O = (6R)-10-formyltetrahydrofolate + H(+). Its pathway is one-carbon metabolism; tetrahydrofolate interconversion. Its function is as follows. Catalyzes the oxidation of 5,10-methylenetetrahydrofolate to 5,10-methenyltetrahydrofolate and then the hydrolysis of 5,10-methenyltetrahydrofolate to 10-formyltetrahydrofolate. This chain is Bifunctional protein FolD, found in Salinibacter ruber (strain DSM 13855 / M31).